The following is a 388-amino-acid chain: Leucine aminopeptidase 1 (388 aa).

The first 19 residues, 1-19 (MKVLTAIALSAIAFTGAVA), serve as a signal peptide directing secretion. Residues 20 to 88 (AVITQEAFLN…YPTLHSASYV (69 aa)) constitute a propeptide that is removed on maturation. N-linked (GlcNAc...) asparagine glycosylation is found at N106 and N180. Residues H188 and D207 each contribute to the Zn(2+) site. N232 is a glycosylation site (N-linked (GlcNAc...) asparagine). Zn(2+) is bound by residues E246 and D273. A disulfide bond links C322 and C326. H355 contributes to the Zn(2+) binding site.

The protein belongs to the peptidase M28 family. M28E subfamily. In terms of assembly, monomer. Zn(2+) serves as cofactor.

The protein resides in the secreted. In terms of biological role, extracellular aminopeptidase that allows assimilation of proteinaceous substrates and which contributes to pathogenicity. This Aspergillus fumigatus (strain CBS 144.89 / FGSC A1163 / CEA10) (Neosartorya fumigata) protein is Leucine aminopeptidase 1 (lap1).